Consider the following 445-residue polypeptide: FAD-dependent monooxygenase sorC (445 aa).

The helical transmembrane segment at 8 to 28 threads the bilayer; it reads PFEVAIVGGGITGLALAVGLL. Residue asparagine 31 is glycosylated (N-linked (GlcNAc...) asparagine). The FAD site is built by glutamate 38 and arginine 119. Arginine 201 is a catalytic residue. FAD contacts are provided by aspartate 323 and alanine 336. Asparagine 358 is a glycosylation site (N-linked (GlcNAc...) asparagine).

It belongs to the paxM FAD-dependent monooxygenase family. Requires FAD as cofactor.

The protein resides in the membrane. Its pathway is secondary metabolite biosynthesis. FAD-dependent monooxygenase; part of the gene cluster that mediates the biosynthesis of sorbicillinoids, a diverse group of yellow secondary metabolites that restrict growth of competing pathogenic fungi but not of bacteria. Sorbicillinoids biosynthesis requires the action of two PKSs. SorA iteratively combines three acetyl units and the growing chain is modified by the ketoacyl reductase subunit, and optional by the enoyl reductase subunit in the second cycle. The polyketide is then handed over to the PKS SorB, which adds three more acetyl units, and two methyl groups. SorB releases an aldehyde, which undergoes spontaneous cyclization resulting in the formation of sorbicillin or 2',3'-dihydrosorbicillin. The monooxygenase sorC oxidizes sorbicillin and 2',3'-dihydrosorbicillin to 2',3'-dihydrosorbicillinol and sorbicillinol, respectively. The oxidoreductase sorD further converts sorbicillinol into oxosorbicillinol. Sorbicillinol is the building block for the other sorbicillinoids such as disorbicillinol, bisvertinolon, and dihydrobisvertinolone. The chain is FAD-dependent monooxygenase sorC from Penicillium rubens (strain ATCC 28089 / DSM 1075 / NRRL 1951 / Wisconsin 54-1255) (Penicillium chrysogenum).